The chain runs to 1298 residues: Phosphoribosylformylglycinamidine synthase (1298 aa).

The interval 303 to 327 is disordered; it reads FPGAATGSGGEIRDEGATGRGAKPK. ATP is bound by residues 305-316, 384-386, and Ala676; these read GAATGSGGEIRD and TGY. Mg(2+) is bound by residues Asp677, Glu716, Asn720, and Asp884. Ser886 contributes to the ATP binding site. One can recognise a Glutamine amidotransferase type-1 domain in the interval 1045 to 1298; sequence VAVLREQGVN…MFRNARAWVN (254 aa). The active-site Nucleophile is Cys1138. Residues His1263 and Glu1265 contribute to the active site.

It in the N-terminal section; belongs to the FGAMS family. In terms of assembly, monomer.

It localises to the cytoplasm. It catalyses the reaction N(2)-formyl-N(1)-(5-phospho-beta-D-ribosyl)glycinamide + L-glutamine + ATP + H2O = 2-formamido-N(1)-(5-O-phospho-beta-D-ribosyl)acetamidine + L-glutamate + ADP + phosphate + H(+). It functions in the pathway purine metabolism; IMP biosynthesis via de novo pathway; 5-amino-1-(5-phospho-D-ribosyl)imidazole from N(2)-formyl-N(1)-(5-phospho-D-ribosyl)glycinamide: step 1/2. In terms of biological role, phosphoribosylformylglycinamidine synthase involved in the purines biosynthetic pathway. Catalyzes the ATP-dependent conversion of formylglycinamide ribonucleotide (FGAR) and glutamine to yield formylglycinamidine ribonucleotide (FGAM) and glutamate. This chain is Phosphoribosylformylglycinamidine synthase, found in Pseudomonas savastanoi pv. phaseolicola (strain 1448A / Race 6) (Pseudomonas syringae pv. phaseolicola (strain 1448A / Race 6)).